A 457-amino-acid chain; its full sequence is Cysteine--tRNA ligase (457 aa).

Cys27 is a Zn(2+) binding site. The short motif at 29 to 39 (PTVYDFAHIGN) is the 'HIGH' region element. Cys211, His236, and Glu240 together coordinate Zn(2+). Residues 269 to 273 (KMSKS) carry the 'KMSKS' region motif. Residue Lys272 coordinates ATP.

It belongs to the class-I aminoacyl-tRNA synthetase family. In terms of assembly, monomer. Zn(2+) is required as a cofactor.

It localises to the cytoplasm. The catalysed reaction is tRNA(Cys) + L-cysteine + ATP = L-cysteinyl-tRNA(Cys) + AMP + diphosphate. This chain is Cysteine--tRNA ligase, found in Ehrlichia ruminantium (strain Welgevonden).